Consider the following 152-residue polypeptide: SsrA-binding protein (152 aa).

It belongs to the SmpB family.

It localises to the cytoplasm. Functionally, required for rescue of stalled ribosomes mediated by trans-translation. Binds to transfer-messenger RNA (tmRNA), required for stable association of tmRNA with ribosomes. tmRNA and SmpB together mimic tRNA shape, replacing the anticodon stem-loop with SmpB. tmRNA is encoded by the ssrA gene; the 2 termini fold to resemble tRNA(Ala) and it encodes a 'tag peptide', a short internal open reading frame. During trans-translation Ala-aminoacylated tmRNA acts like a tRNA, entering the A-site of stalled ribosomes, displacing the stalled mRNA. The ribosome then switches to translate the ORF on the tmRNA; the nascent peptide is terminated with the 'tag peptide' encoded by the tmRNA and targeted for degradation. The ribosome is freed to recommence translation, which seems to be the essential function of trans-translation. The sequence is that of SsrA-binding protein from Gloeobacter violaceus (strain ATCC 29082 / PCC 7421).